The chain runs to 50 residues: Light-harvesting protein B-870 beta chain (50 aa).

At 2–22 the chain is on the cytoplasmic side; the sequence is ADNTDLSFTGLTDEQAQELHS. Residues H21 and H39 each coordinate a bacteriochlorophyll. A helical membrane pass occupies residues 23 to 45; sequence VYMSGLFLFAAVAVVAHLATYIW. Topologically, residues 46–50 are periplasmic; sequence RPWFG.

Belongs to the antenna complex beta subunit family. As to quaternary structure, the core complex is formed by different alpha and beta chains, binding bacteriochlorophyll molecules, and arranged most probably in tetrameric structures disposed around the reaction center. The non-pigmented gamma chains may constitute additional components.

Its subcellular location is the cell inner membrane. Its function is as follows. Antenna complexes are light-harvesting systems, which transfer the excitation energy to the reaction centers. The protein is Light-harvesting protein B-870 beta chain (pufB) of Roseobacter denitrificans (strain ATCC 33942 / OCh 114) (Erythrobacter sp. (strain OCh 114)).